The sequence spans 107 residues: RNA silencing suppressor (107 aa).

The segment at Arg-46–Arg-49 is basic. The C4-type zinc finger occupies Cys-56–Cys-78.

It belongs to the carlaviruses nucleic acid-binding protein family.

Suppressor of viral-induced RNA silencing. The potential mechanism of action is based on sequestering siRNAs. The sequence is that of RNA silencing suppressor from Chrysanthemum morifolium (Florist's daisy).